Consider the following 415-residue polypeptide: Beta-1,4-glucuronyltransferase 1 (415 aa).

The Cytoplasmic segment spans residues 1–8; it reads MQMSYAIR. A helical; Signal-anchor for type II membrane protein transmembrane segment spans residues 9-36; that stretch reads CAFYQLLLAALMLVAMLQLLYLSLLSGL. The Lumenal portion of the chain corresponds to 37-415; it reads HGQEEQDQYF…AKYPDSPRHC (379 aa). The N-linked (GlcNAc...) asparagine glycan is linked to Asn204. Positions 227 and 229 each coordinate Mn(2+). A glycan (N-linked (GlcNAc...) asparagine) is linked at Asn300.

Belongs to the glycosyltransferase 49 family. In terms of assembly, interacts with LARGE1 and LARGE2. Mn(2+) serves as cofactor.

The protein resides in the golgi apparatus membrane. It carries out the reaction 3-O-[beta-D-Xyl-(1-&gt;4)-Rib-ol-P-Rib-ol-P-3-beta-D-GalNAc-(1-&gt;3)-beta-D-GlcNAc-(1-&gt;4)-(O-6-P-alpha-D-Man)]-Thr-[protein] + UDP-alpha-D-glucuronate = 3-O-[beta-D-GlcA-(1-&gt;3)-beta-D-Xyl-(1-&gt;4)-Rib-ol-P-Rib-ol-P-3-beta-D-GalNAc-(1-&gt;3)-beta-D-GlcNAc-(1-&gt;4)-(O-6-P-alpha-D-Man)]-Thr-[protein] + UDP + H(+). It participates in protein modification; protein glycosylation. In terms of biological role, beta-1,4-glucuronyltransferase involved in O-mannosylation of alpha-dystroglycan (DAG1). Transfers a glucuronic acid (GlcA) residue onto a xylose (Xyl) acceptor to produce the glucuronyl-beta-1,4-xylose-beta disaccharide primer, which is further elongated by LARGE1, during synthesis of phosphorylated O-mannosyl glycan. Phosphorylated O-mannosyl glycan is a carbohydrate structure present in alpha-dystroglycan (DAG1), which is required for binding laminin G-like domain-containing extracellular proteins with high affinity. Required for axon guidance; via its function in O-mannosylation of alpha-dystroglycan (DAG1). The chain is Beta-1,4-glucuronyltransferase 1 from Bos taurus (Bovine).